We begin with the raw amino-acid sequence, 331 residues long: Meiotic recombination protein P22 (331 aa).

The disordered stretch occupies residues 132-187 (NNIQKEVHQRNSQRRSIQCTPKKRGRKPKQPAKKLQSRISTDQLGSTPSPSKLPAK). A compositionally biased stretch (basic residues) spans 152 to 167 (PKKRGRKPKQPAKKLQ). Polar residues predominate over residues 168–181 (SRISTDQLGSTPSP).

This sequence belongs to the TOP6B-like family.

It localises to the chromosome. Functionally, required for formation of the mei-W68-mediated double-strand breaks (DSBs) that initiate meiotic recombination. This Drosophila melanogaster (Fruit fly) protein is Meiotic recombination protein P22.